We begin with the raw amino-acid sequence, 122 residues long: Sterile alpha motif domain-containing protein 13 (122 aa).

Residues 51-119 (WAVMDVVNYF…KPLQTKHLKN (69 aa)) form the SAM domain.

This Homo sapiens (Human) protein is Sterile alpha motif domain-containing protein 13 (SAMD13).